A 423-amino-acid chain; its full sequence is MTISALGINHKTASVDLREQVAFSAEQLDAALQAVRNLQGVEEAVIVSTCNRTELYCRGEVSGDLLLGWLTGFHKLAPNALENHHYHFQGEQAITHLMSVASGLDSLVLGEPQILGQVKQAYQAAKRQASVGGILERLFQQTFRVAKTVRNETAVGQNAVSVAYAAVSMARHIFANLQKSKVLLIGAGDTSELVAQHLKQQGVTEILVANRTLQRASEMAERVGATAHSLSELSELLPQADIVVSSTASTLPIVGKGSIEKALKKRRHRPMLLIDLAVPRDIEEQVNELDDAYLYTVDDLQSIISENIRNREQAAREAQVIIQQQTKEFNDWLKSLNSVELVREYRTHTKTLADEQLKKALAQIEQGKDPAEVLQRFSHRLVQQLTHKPTSLLKSAGENNDQYTLAVLQQLWSEPSSDSSKGK.

Substrate is bound by residues 49-52, Ser-106, 111-113, and Gln-117; these read TCNR and EPQ. Cys-50 acts as the Nucleophile in catalysis. 186–191 provides a ligand contact to NADP(+); it reads GAGDTS.

The protein belongs to the glutamyl-tRNA reductase family. As to quaternary structure, homodimer.

The catalysed reaction is (S)-4-amino-5-oxopentanoate + tRNA(Glu) + NADP(+) = L-glutamyl-tRNA(Glu) + NADPH + H(+). The protein operates within porphyrin-containing compound metabolism; protoporphyrin-IX biosynthesis; 5-aminolevulinate from L-glutamyl-tRNA(Glu): step 1/2. Catalyzes the NADPH-dependent reduction of glutamyl-tRNA(Glu) to glutamate 1-semialdehyde (GSA). The sequence is that of Glutamyl-tRNA reductase from Idiomarina loihiensis (strain ATCC BAA-735 / DSM 15497 / L2-TR).